The primary structure comprises 1171 residues: Protein WWC2 (1171 aa).

2 WW domains span residues 9 to 42 (LPLP…DPRD) and 56 to 89 (NELP…DPRK). 3 coiled-coil regions span residues 120–193 (KEQR…YKEQ), 223–257 (ELKS…LEEA), and 301–420 (LAEK…KSAT). Disordered regions lie at residues 521-552 (SPTA…LSPP) and 603-637 (QALA…KNPD). The span at 534–551 (PKSVTSLSSLSSLSSLSP) shows a compositional bias: low complexity. 2 stretches are compositionally biased toward basic and acidic residues: residues 606-616 (AERKSTGEGLR) and 625-637 (GRTD…KNPD). Positions 684–806 (GAAQAQLILR…FSNDVHTQWY (123 aa)) constitute a C2 domain. Coiled-coil stretches lie at residues 836-870 (LDLD…EQLC) and 1047-1123 (DLEL…NAEK).

This sequence belongs to the WWC family.

Its subcellular location is the cytoplasm. It is found in the cytosol. Its function is as follows. Negative regulator of the Hippo signaling pathway, also known as the Salvador-Warts-Hippo (SWH) pathway. The polypeptide is Protein WWC2 (wwc2) (Xenopus tropicalis (Western clawed frog)).